The primary structure comprises 163 residues: Crossover junction endodeoxyribonuclease RuvC (163 aa).

Catalysis depends on residues aspartate 7, glutamate 67, and aspartate 140. Mg(2+) contacts are provided by aspartate 7, glutamate 67, and aspartate 140.

Belongs to the RuvC family. As to quaternary structure, homodimer which binds Holliday junction (HJ) DNA. The HJ becomes 2-fold symmetrical on binding to RuvC with unstacked arms; it has a different conformation from HJ DNA in complex with RuvA. In the full resolvosome a probable DNA-RuvA(4)-RuvB(12)-RuvC(2) complex forms which resolves the HJ. Requires Mg(2+) as cofactor.

It is found in the cytoplasm. It carries out the reaction Endonucleolytic cleavage at a junction such as a reciprocal single-stranded crossover between two homologous DNA duplexes (Holliday junction).. Functionally, the RuvA-RuvB-RuvC complex processes Holliday junction (HJ) DNA during genetic recombination and DNA repair. Endonuclease that resolves HJ intermediates. Cleaves cruciform DNA by making single-stranded nicks across the HJ at symmetrical positions within the homologous arms, yielding a 5'-phosphate and a 3'-hydroxyl group; requires a central core of homology in the junction. The consensus cleavage sequence is 5'-(A/T)TT(C/G)-3'. Cleavage occurs on the 3'-side of the TT dinucleotide at the point of strand exchange. HJ branch migration catalyzed by RuvA-RuvB allows RuvC to scan DNA until it finds its consensus sequence, where it cleaves and resolves the cruciform DNA. The protein is Crossover junction endodeoxyribonuclease RuvC of Petrotoga mobilis (strain DSM 10674 / SJ95).